The following is a 339-amino-acid chain: DNA-directed RNA polymerase subunit alpha (339 aa).

Residues 1–235 (MTIQKNWQEL…DQLNVFVNFE (235 aa)) are alpha N-terminal domain (alpha-NTD). Residues 251–339 (FNPAFLKKVD…ELAKRFEDHY (89 aa)) are alpha C-terminal domain (alpha-CTD).

This sequence belongs to the RNA polymerase alpha chain family. As to quaternary structure, homodimer. The RNAP catalytic core consists of 2 alpha, 1 beta, 1 beta' and 1 omega subunit. When a sigma factor is associated with the core the holoenzyme is formed, which can initiate transcription.

The enzyme catalyses RNA(n) + a ribonucleoside 5'-triphosphate = RNA(n+1) + diphosphate. Its function is as follows. DNA-dependent RNA polymerase catalyzes the transcription of DNA into RNA using the four ribonucleoside triphosphates as substrates. The polypeptide is DNA-directed RNA polymerase subunit alpha (Rhodopseudomonas palustris (strain BisB18)).